We begin with the raw amino-acid sequence, 292 residues long: 4-hydroxy-tetrahydrodipicolinate synthase (292 aa).

Thr45 contributes to the pyruvate binding site. The active-site Proton donor/acceptor is Tyr133. The active-site Schiff-base intermediate with substrate is Lys161. Residue Ile203 participates in pyruvate binding.

This sequence belongs to the DapA family. As to quaternary structure, homotetramer; dimer of dimers.

The protein localises to the cytoplasm. The enzyme catalyses L-aspartate 4-semialdehyde + pyruvate = (2S,4S)-4-hydroxy-2,3,4,5-tetrahydrodipicolinate + H2O + H(+). Its pathway is amino-acid biosynthesis; L-lysine biosynthesis via DAP pathway; (S)-tetrahydrodipicolinate from L-aspartate: step 3/4. In terms of biological role, catalyzes the condensation of (S)-aspartate-beta-semialdehyde [(S)-ASA] and pyruvate to 4-hydroxy-tetrahydrodipicolinate (HTPA). This chain is 4-hydroxy-tetrahydrodipicolinate synthase, found in Shigella flexneri.